Reading from the N-terminus, the 208-residue chain is FMN-dependent NADH:quinone oxidoreductase 1 (208 aa).

17 to 19 (SVS) is a binding site for FMN.

Belongs to the azoreductase type 1 family. Homodimer. FMN is required as a cofactor.

It carries out the reaction 2 a quinone + NADH + H(+) = 2 a 1,4-benzosemiquinone + NAD(+). The enzyme catalyses N,N-dimethyl-1,4-phenylenediamine + anthranilate + 2 NAD(+) = 2-(4-dimethylaminophenyl)diazenylbenzoate + 2 NADH + 2 H(+). Quinone reductase that provides resistance to thiol-specific stress caused by electrophilic quinones. Its function is as follows. Also exhibits azoreductase activity. Catalyzes the reductive cleavage of the azo bond in aromatic azo compounds to the corresponding amines. The protein is FMN-dependent NADH:quinone oxidoreductase 1 of Listeria monocytogenes serovar 1/2a (strain ATCC BAA-679 / EGD-e).